A 214-amino-acid chain; its full sequence is Phosphatidylserine decarboxylase proenzyme (214 aa).

Residue serine 182 is the Schiff-base intermediate with substrate; via pyruvic acid of the active site. Serine 182 bears the Pyruvic acid (Ser); by autocatalysis mark.

It belongs to the phosphatidylserine decarboxylase family. PSD-A subfamily. In terms of assembly, heterodimer of a large membrane-associated beta subunit and a small pyruvoyl-containing alpha subunit. It depends on pyruvate as a cofactor. Is synthesized initially as an inactive proenzyme. Formation of the active enzyme involves a self-maturation process in which the active site pyruvoyl group is generated from an internal serine residue via an autocatalytic post-translational modification. Two non-identical subunits are generated from the proenzyme in this reaction, and the pyruvate is formed at the N-terminus of the alpha chain, which is derived from the carboxyl end of the proenzyme. The post-translation cleavage follows an unusual pathway, termed non-hydrolytic serinolysis, in which the side chain hydroxyl group of the serine supplies its oxygen atom to form the C-terminus of the beta chain, while the remainder of the serine residue undergoes an oxidative deamination to produce ammonia and the pyruvoyl prosthetic group on the alpha chain.

The protein localises to the cell membrane. It carries out the reaction a 1,2-diacyl-sn-glycero-3-phospho-L-serine + H(+) = a 1,2-diacyl-sn-glycero-3-phosphoethanolamine + CO2. The protein operates within phospholipid metabolism; phosphatidylethanolamine biosynthesis; phosphatidylethanolamine from CDP-diacylglycerol: step 2/2. Its function is as follows. Catalyzes the formation of phosphatidylethanolamine (PtdEtn) from phosphatidylserine (PtdSer). This Burkholderia vietnamiensis (strain G4 / LMG 22486) (Burkholderia cepacia (strain R1808)) protein is Phosphatidylserine decarboxylase proenzyme.